The following is a 44-amino-acid chain: M-factor (44 aa).

Residues 1 to 32 constitute a propeptide that is removed on maturation; it reads MDSIATNTHSSSIVNAYNNNPTDVVKTQNIKN. Cys-41 carries the post-translational modification Cysteine methyl ester. Cys-41 carries the S-farnesyl cysteine lipid modification. Positions 42 to 44 are cleaved as a propeptide — removed in mature form; it reads VIA.

It is found in the secreted. In terms of biological role, M-factor is a mating pheromone produced by M-type mating cells. All three mfm genes contribute to the production of M-factor. The sequence is that of M-factor (mfm2) from Schizosaccharomyces pombe (strain 972 / ATCC 24843) (Fission yeast).